A 7031-amino-acid polypeptide reads, in one-letter code: Extracellular matrix-binding protein EbhB (7031 aa).

The signal sequence occupies residues 1–39 (MNYRDKIQKFSIRKYTVGTFSTVIATLVFLGFNTSQAHA). Positions 41 to 59 (ETNQPASVVKQKQQSNNEQ) are enriched in polar residues. 5 disordered regions span residues 41-86 (ETNQ…HENE), 99-152 (KVAQ…GNDN), 250-277 (PQRQQTSRRSNRIQTRSVESRAAEPRSV), 1342-1373 (NNITGNEKSQAEAGGRPNFRTTGYSQSNATTD), and 2418-2438 (TITPKAGTGHSVSSNPSTLTA). A compositionally biased stretch (low complexity) spans 65–80 (SQVQNSQNSQNGQSLS). Positions 99-117 (KVAQSSTTNDEQPASQNVN) are enriched in polar residues. Over residues 130–140 (PDKEQSKHKQN) the composition is skewed to basic and acidic residues. Composition is skewed to polar residues over residues 141-151 (ESQSANKNGND), 250-266 (PQRQQTSRRSNRIQTRS), 1360-1373 (FRTTGYSQSNATTD), and 2427-2438 (HSVSSNPSTLTA). FIVAR domains lie at 2524–2580 (AKNH…VSDA), 2610–2666 (SKNN…ISDE), 2687–2750 (DTHA…VQSA), 2780–2836 (AKTK…IAAE), 2864–2919 (AKTQ…IRQN), 2947–3002 (AKNQ…INTN), 3030–3085 (AKTQ…INDK), 3154–3212 (AMTK…VNQK), 3280–3339 (AMTG…VNNA), 3407–3465 (AMGN…VNRA), 3533–3591 (AMGN…VTEA), 3659–3717 (AMNT…ITQK), 3785–3843 (AMAS…VEAA), 3911–3969 (AMGN…VEQA), 4037–4095 (AMGT…VTAA), 4163–4221 (AMKG…ITQA), 4289–4347 (QMGN…VEAA), 4415–4473 (AMAN…VENA), 4541–4599 (AMGT…INQI), 4667–4725 (AMGQ…VDRA), 4793–4851 (AMNS…VDNA), 4919–4977 (AMGA…INGM), 5045–5103 (AMTA…VNSA), 5171–5229 (AMKG…ITQV), 5297–5355 (AMHS…VEQA), 5423–5481 (AMGQ…VERA), 5549–5607 (AMTA…VTNA), 5675–5733 (AMKG…INQA), 5801–5859 (AMTN…VETA), 5927–5985 (AMSN…VEQA), 6053–6111 (AMNQ…INQK), 6179–6236 (AMGN…VQAA), 6304–6362 (AMGQ…VEAA), 6430–6488 (AMQR…VEQA), 6556–6614 (AMDQ…VTAA), 6682–6740 (AMNQ…VTQA), 6818–6866 (DKDQ…VEAA), and 6934–6992 (AMGN…VEAA).

This chain is Extracellular matrix-binding protein EbhB (ebhB), found in Staphylococcus aureus (strain Newman).